Consider the following 215-residue polypeptide: Protein LURP-one-related 16 (215 aa).

Residue Gly2 is the site of N-myristoyl glycine attachment.

The protein belongs to the LOR family.

Its function is as follows. Might be related to the phospholipid scramblase and tubby-like superfamily of membrane tethered transcription factors. The chain is Protein LURP-one-related 16 from Arabidopsis thaliana (Mouse-ear cress).